The primary structure comprises 501 residues: Lycopene beta cyclase, chloroplastic (501 aa).

The transit peptide at 1-48 directs the protein to the chloroplast; sequence MDTLLKTPNKLDFFIPQFHGFERLCSNNPYHSRVRLGVKKRAIKIVSS. Valine 49 bears the N-acetylvaline mark. 85 to 113 contributes to the NAD(+) binding site; sequence LAIVGGGPAGLAVAQQVSEAGLSVCSIDP.

The protein belongs to the lycopene cyclase family.

The protein resides in the plastid. Its subcellular location is the chloroplast. It catalyses the reaction a carotenoid psi-end group = a carotenoid beta-end derivative. The protein operates within carotenoid biosynthesis; beta-carotene biosynthesis. Its pathway is carotenoid biosynthesis; beta-zeacarotene biosynthesis. Functionally, involved in carotenoid biosynthesis. Catalyzes the double cyclization reaction which converts lycopene to beta-carotene and neurosporene to beta-zeacarotene. Major lycopene beta-cyclase that does not seem to be involved in neoxanthin synthesis. Involved in salt tolerance improvement by increasing synthesis of carotenoids, which impairs reactive oxygen species (ROS) and protects the photosynthetic system under salt stress. The polypeptide is Lycopene beta cyclase, chloroplastic (Arabidopsis thaliana (Mouse-ear cress)).